We begin with the raw amino-acid sequence, 1060 residues long: Anoctamin-8 (1060 aa).

Residues Met-1–Ser-32 form a disordered region. Ala-2 is modified (N-acetylalanine). The Cytoplasmic portion of the chain corresponds to Ala-2–Lys-244. The span at Glu-14 to Pro-23 shows a compositional bias: basic and acidic residues. The chain crosses the membrane as a helical span at residues Ile-245–Phe-265. Topologically, residues Gly-266–Asp-281 are extracellular. Residues Val-282–Trp-302 traverse the membrane as a helical segment. The Cytoplasmic portion of the chain corresponds to Lys-303 to Gln-356. At Ser-318 the chain carries Phosphoserine. A helical membrane pass occupies residues Leu-357–Gly-377. The Extracellular portion of the chain corresponds to Cys-378–Lys-400. Residues Val-401–Leu-421 traverse the membrane as a helical segment. Residues Asn-422 to Leu-437 lie on the Cytoplasmic side of the membrane. A helical membrane pass occupies residues Ile-438–Phe-458. Residues Tyr-459–Glu-745 are Extracellular-facing. 4 disordered regions span residues Ala-529–Asp-605, Gly-619–Met-640, Ala-653–Thr-672, and Gly-680–Gln-723. Gly residues predominate over residues Gly-534–Gly-547. Composition is skewed to acidic residues over residues Pro-549–Ala-559 and Glu-581–Ser-602. At Ser-665 the chain carries Phosphoserine. The span at Gly-680–Glu-694 shows a compositional bias: basic and acidic residues. The N-linked (GlcNAc...) asparagine glycan is linked to Asn-708. The helical transmembrane segment at Met-746–Cys-766 threads the bilayer. Topologically, residues Ala-767–Lys-802 are cytoplasmic. Ser-796 bears the Phosphoserine mark. The helical transmembrane segment at Val-803–Gly-823 threads the bilayer. The Extracellular portion of the chain corresponds to Gln-824 to Ala-836. A helical membrane pass occupies residues Ala-837–Val-857. Topologically, residues Ala-858–Pro-1060 are cytoplasmic. The tract at residues His-884 to Pro-1060 is disordered. Basic and acidic residues-rich tracts occupy residues Arg-899–Ala-927 and Val-935–Arg-950. Residues Thr-972–Ser-986 are compositionally biased toward pro residues. Position 991 is an asymmetric dimethylarginine; alternate (Arg-991). Arg-991 carries the post-translational modification Omega-N-methylarginine; alternate. Arg-999 carries the omega-N-methylarginine modification. Positions Pro-1049 to Pro-1060 are enriched in basic and acidic residues.

It belongs to the anoctamin family. Predominant expression seen in epithelial tissues.

It is found in the cell membrane. Functionally, does not exhibit calcium-activated chloride channel (CaCC) activity. This Mus musculus (Mouse) protein is Anoctamin-8 (Ano8).